The primary structure comprises 177 residues: Large ribosomal subunit protein uL6 (177 aa).

It belongs to the universal ribosomal protein uL6 family. In terms of assembly, part of the 50S ribosomal subunit.

This protein binds to the 23S rRNA, and is important in its secondary structure. It is located near the subunit interface in the base of the L7/L12 stalk, and near the tRNA binding site of the peptidyltransferase center. The sequence is that of Large ribosomal subunit protein uL6 from Sphingopyxis alaskensis (strain DSM 13593 / LMG 18877 / RB2256) (Sphingomonas alaskensis).